Reading from the N-terminus, the 686-residue chain is Pentatricopeptide repeat-containing protein 1, mitochondrial (686 aa).

Positions 55 to 67 are enriched in polar residues; it reads RMSSLCSDSSTPV. Residues 55–79 form a disordered region; that stretch reads RMSSLCSDSSTPVAPQEEEEEESFG. PPR repeat units follow at residues 124-160, 161-195, 196-234, 235-269, and 270-306; these read TPYWYFLQCKRLLKEGKLAEALDLFERQMLKEERLQP, LECNYTVLIGGCGRVGYLKKAFRLFNDMKKRDLEP, SDATYTALFNVCAESPWKDSALQSALKLRQQLQAQNFQL, NLKTYHALLKVAAKCADLRVCLEVFKEIIQKGHAV, and TEETFCFLLMGCIQDKKTGFRQAMQVWRQMLSLGIKP. The disordered stretch occupies residues 383–407; it reads KLEGPPAFPEARETSRTQPEVETKA. Basic and acidic residues predominate over residues 392-407; the sequence is EARETSRTQPEVETKA. PPR repeat units lie at residues 508-542 and 575-609; these read DITFFNTLIRKKSKLGDLEGAKALLPILAKKGIVP and NTHIYSTLINAALKKLDYTYLISILKDMRRNSVPV.

Belongs to the PTCD1 family. As to quaternary structure, associates with mitochondrial leucine tRNAs. Interacts with ELAC2.

It localises to the mitochondrion matrix. In terms of biological role, mitochondrial protein implicated in negative regulation of leucine tRNA levels, as well as negative regulation of mitochondria-encoded proteins and COX activity. Also affects the 3'-processing of mitochondrial tRNAs. In Rattus norvegicus (Rat), this protein is Pentatricopeptide repeat-containing protein 1, mitochondrial (Ptcd1).